The following is a 276-amino-acid chain: Shikimate dehydrogenase (NADP(+)) (276 aa).

Residues 15–17 and T63 each bind shikimate; that span reads SMS. K67 functions as the Proton acceptor in the catalytic mechanism. Residue D79 coordinates NADP(+). Positions 88 and 103 each coordinate shikimate. NADP(+) is bound by residues 130-134, 154-159, and I217; these read GAGGA and NRTLSR. A shikimate-binding site is contributed by Y219. Position 240 (G240) interacts with NADP(+).

Belongs to the shikimate dehydrogenase family. Homodimer.

The enzyme catalyses shikimate + NADP(+) = 3-dehydroshikimate + NADPH + H(+). It participates in metabolic intermediate biosynthesis; chorismate biosynthesis; chorismate from D-erythrose 4-phosphate and phosphoenolpyruvate: step 4/7. Functionally, involved in the biosynthesis of the chorismate, which leads to the biosynthesis of aromatic amino acids. Catalyzes the reversible NADPH linked reduction of 3-dehydroshikimate (DHSA) to yield shikimate (SA). This Oceanobacillus iheyensis (strain DSM 14371 / CIP 107618 / JCM 11309 / KCTC 3954 / HTE831) protein is Shikimate dehydrogenase (NADP(+)).